Here is a 384-residue protein sequence, read N- to C-terminus: Flap endonuclease 1 (384 aa).

Residues 1–105 are N-domain; that stretch reads MGIKKLTDLI…GELAKRQARR (105 aa). Aspartate 34 is a Mg(2+) binding site. Arginine 71 is a DNA binding site. Mg(2+) is bound by residues aspartate 87, glutamate 159, glutamate 161, aspartate 180, and aspartate 182. The tract at residues 123 to 254 is I-domain; the sequence is EVQKFAKRVI…KRAIELIQKH (132 aa). DNA is bound at residue glutamate 159. Positions 232 and 234 each coordinate DNA. Aspartate 234 is a binding site for Mg(2+). The segment at 338-346 is interaction with PCNA; it reads VQSRMDSFI. The interval 349 to 384 is disordered; sequence IKKPEDPNDKKKKVTKTPSKPSAKTSKKSSSTFKRK. Residues 364–384 show a composition bias toward low complexity; sequence KTPSKPSAKTSKKSSSTFKRK.

This sequence belongs to the XPG/RAD2 endonuclease family. FEN1 subfamily. Interacts with PCNA. Three molecules of repg bind to one PCNA trimer with each molecule binding to one PCNA monomer. PCNA stimulates the nuclease activity without altering cleavage specificity. Mg(2+) serves as cofactor. Post-translationally, phosphorylated. Phosphorylation upon DNA damage induces relocalization to the nuclear plasma.

It localises to the nucleus. The protein resides in the nucleolus. It is found in the nucleoplasm. Its subcellular location is the mitochondrion. Structure-specific nuclease with 5'-flap endonuclease and 5'-3' exonuclease activities involved in DNA replication and repair. During DNA replication, cleaves the 5'-overhanging flap structure that is generated by displacement synthesis when DNA polymerase encounters the 5'-end of a downstream Okazaki fragment. It enters the flap from the 5'-end and then tracks to cleave the flap base, leaving a nick for ligation. Also involved in the long patch base excision repair (LP-BER) pathway, by cleaving within the apurinic/apyrimidinic (AP) site-terminated flap. Acts as a genome stabilization factor that prevents flaps from equilibrating into structures that lead to duplications and deletions. Also possesses 5'-3' exonuclease activity on nicked or gapped double-stranded DNA, and exhibits RNase H activity. Also involved in replication and repair of rDNA and in repairing mitochondrial DNA. This Dictyostelium discoideum (Social amoeba) protein is Flap endonuclease 1.